Here is a 104-residue protein sequence, read N- to C-terminus: Thioredoxin (104 aa).

A Thioredoxin domain is found at 2 to 104; it reads AIVKATDQSF…ALQELVNKHL (103 aa). Cys29 and Cys32 are disulfide-bonded.

The protein belongs to the thioredoxin family.

In terms of biological role, participates in various redox reactions through the reversible oxidation of its active center dithiol to a disulfide and catalyzes dithiol-disulfide exchange reactions. This chain is Thioredoxin (trxA), found in Bacillus subtilis (strain 168).